The chain runs to 231 residues: MATSSTQLLLSSSSLFHSQITKKPFLLPATKIGVWRPKKSLSLSCRPSASVSAASSAVDVNESVTSEKPTKTLPFRIGHGFDLHRLEPGYPLIIGGIVIPHDRGCEAHSDGDVLLHCVVDAILGALGLPDIGQIFPDSDPKWKGAASSVFIKEAVRLMDEAGYEIGNLDATLILQRPKISPHKETIRSNLSKLLGADPSVVNLKAKTHEKVDSLGENRSIAAHTVILLMKK.

A chloroplast-targeting transit peptide spans 1-52 (MATSSTQLLLSSSSLFHSQITKKPFLLPATKIGVWRPKKSLSLSCRPSASVS). Positions 82 and 84 each coordinate a divalent metal cation. Substrate is bound by residues 82–84 (DLH), 108–109 (HS), 112–120 (DVLLHCVVD), 130–132 (DIG), 135–139 (FPDSD), Asp-139, 174–180 (LQRPKIS), and 205–209 (AKTHE). Residue His-116 participates in a divalent metal cation binding.

Belongs to the IspF family. As to quaternary structure, homotrimer. A divalent metal cation serves as cofactor.

The protein localises to the plastid. It localises to the chloroplast stroma. The catalysed reaction is 4-CDP-2-C-methyl-D-erythritol 2-phosphate = 2-C-methyl-D-erythritol 2,4-cyclic diphosphate + CMP. It participates in isoprenoid biosynthesis; isopentenyl diphosphate biosynthesis via DXP pathway; isopentenyl diphosphate from 1-deoxy-D-xylulose 5-phosphate: step 4/6. In terms of biological role, enzyme of the plastid non-mevalonate pathway for isoprenoid biosynthesis that converts 4-diphosphocytidyl-2C-methyl-D-erythritol 2-phosphate into 2C-methyl-D-erythritol 2,4-cyclodiphosphate and CMP. Is essential for chloroplast development. The sequence is that of 2-C-methyl-D-erythritol 2,4-cyclodiphosphate synthase, chloroplastic from Arabidopsis thaliana (Mouse-ear cress).